Consider the following 172-residue polypeptide: Small ribosomal subunit protein uS5c (172 aa).

An S5 DRBM domain is found at 15 to 78; that stretch reads WEEKVVQVKR…TDAKKHIINV (64 aa).

Belongs to the universal ribosomal protein uS5 family. In terms of assembly, part of the 30S ribosomal subunit. Contacts protein S4.

Its subcellular location is the plastid. It is found in the chloroplast. Functionally, with S4 and S12 plays an important role in translational accuracy. In Gracilaria tenuistipitata var. liui (Red alga), this protein is Small ribosomal subunit protein uS5c (rps5).